Here is a 1117-residue protein sequence, read N- to C-terminus: Centrosomal protein of 126 kDa (1117 aa).

Positions 1 to 42 are disordered; the sequence is MLAGRPGTRSAVGELGTESSDNLDRAPLGPRESGGHHRPGSY. The stretch at 49–121 forms a coiled coil; that stretch reads LEKNLEEERQ…EEVTEKFQRA (73 aa). Disordered stretches follow at residues 643–664 and 730–759; these read AENS…QQFH and KKEE…IIRK. Basic and acidic residues predominate over residues 730–744; sequence KKEESKIPVHDDSKT. Residues 745–758 are compositionally biased toward basic residues; that stretch reads KQGKPQRGRAKIIR.

As to quaternary structure, interacts with DCTN1. As to expression, expressed in brain, lung, skeletal muscle, kidney, pancreas, testis and ovary.

It is found in the midbody. The protein localises to the cytoplasm. It localises to the cytoskeleton. Its subcellular location is the microtubule organizing center. The protein resides in the centrosome. It is found in the cilium basal body. Participates in cytokinesis. Necessary for microtubules and mitotic spindle organization. Involved in primary cilium formation. This is Centrosomal protein of 126 kDa from Homo sapiens (Human).